Here is a 204-residue protein sequence, read N- to C-terminus: Urease accessory protein UreG (204 aa).

GTP is bound at residue 11–18; the sequence is GPVGAGKT.

It belongs to the SIMIBI class G3E GTPase family. UreG subfamily. Homodimer. UreD, UreF and UreG form a complex that acts as a GTP-hydrolysis-dependent molecular chaperone, activating the urease apoprotein by helping to assemble the nickel containing metallocenter of UreC. The UreE protein probably delivers the nickel.

It is found in the cytoplasm. Functionally, facilitates the functional incorporation of the urease nickel metallocenter. This process requires GTP hydrolysis, probably effectuated by UreG. In Staphylococcus epidermidis (strain ATCC 12228 / FDA PCI 1200), this protein is Urease accessory protein UreG.